The sequence spans 495 residues: Acetyl-coenzyme A carboxylase carboxyl transferase subunit beta, chloroplastic (495 aa).

The segment at 188–208 (SRNSSENEGSSRRTRTKGSDL) is disordered. Residues 226 to 495 (LWVQCENCYG…PLNQKSSKIK (270 aa)) enclose the CoA carboxyltransferase N-terminal domain. The Zn(2+) site is built by cysteine 230, cysteine 233, cysteine 249, and cysteine 252. A C4-type zinc finger spans residues 230–252 (CENCYGLNYKKFFKSKMNICEQC).

It belongs to the AccD/PCCB family. As to quaternary structure, acetyl-CoA carboxylase is a heterohexamer composed of biotin carboxyl carrier protein, biotin carboxylase and 2 subunits each of ACCase subunit alpha and ACCase plastid-coded subunit beta (accD). Requires Zn(2+) as cofactor.

Its subcellular location is the plastid. The protein resides in the chloroplast stroma. It carries out the reaction N(6)-carboxybiotinyl-L-lysyl-[protein] + acetyl-CoA = N(6)-biotinyl-L-lysyl-[protein] + malonyl-CoA. It participates in lipid metabolism; malonyl-CoA biosynthesis; malonyl-CoA from acetyl-CoA: step 1/1. Its function is as follows. Component of the acetyl coenzyme A carboxylase (ACC) complex. Biotin carboxylase (BC) catalyzes the carboxylation of biotin on its carrier protein (BCCP) and then the CO(2) group is transferred by the transcarboxylase to acetyl-CoA to form malonyl-CoA. This is Acetyl-coenzyme A carboxylase carboxyl transferase subunit beta, chloroplastic from Nicotiana tomentosiformis (Tobacco).